The chain runs to 181 residues: Mating-type M-specific polypeptide Mc (181 aa).

Residues 103–171 constitute a DNA-binding region (HMG box); sequence TPRPPNAFIL…QHQKMYPGYK (69 aa).

The protein resides in the nucleus. Functionally, mating type proteins are sequence specific DNA-binding proteins that act as master switches in yeast differentiation by controlling gene expression in a cell type-specific fashion. Positive regulator of MFM genes. The HMG box recognizes the DNA sequence 5'-AACAAAG-3'. Required for conjugation and efficient meiosis. In Schizosaccharomyces kambucha (Fission yeast), this protein is Mating-type M-specific polypeptide Mc (matMc).